Reading from the N-terminus, the 1435-residue chain is Gag-Pol polyprotein (1435 aa).

The N-myristoyl glycine; by host moiety is linked to residue Gly-2. Residues 7-31 (VLSGGKLDSWEKIRLRPGGRKKYKL) are interaction with Gp41. The tract at residues 8–43 (LSGGKLDSWEKIRLRPGGRKKYKLKHIVWASRELGR) is interaction with host CALM1. An interaction with host AP3D1 region spans residues 12-19 (KLDSWEKI). The segment at 14–33 (DSWEKIRLRPGGRKKYKLKH) is interaction with membrane phosphatidylinositol 4,5-bisphosphate and RNA. The Nuclear export signal signature appears at 16–22 (WEKIRLR). A Nuclear localization signal motif is present at residues 26–32 (RKKYKLK). The interaction with membrane phosphatidylinositol 4,5-bisphosphate stretch occupies residues 72–76 (EELRS). Residues 107–126 (QKNSQQEIQQAAKNEGNSNP) are disordered. The segment covering 108 to 126 (KNSQQEIQQAAKNEGNSNP) has biased composition (polar residues). Tyr-131 carries the post-translational modification Phosphotyrosine; by host. The tract at residues 188–226 (NTVGGHQAAMQMLKDTINDEAAEWDRIHPQQAGPIPPGQ) is interaction with human PPIA/CYPA and NUP153. The segment at 276-362 (YSPVSILDIR…GGPSHKARVL (87 aa)) is dimerization/Multimerization of capsid protein p24. 2 CCHC-type zinc fingers span residues 391–408 (IKCF…NCRA) and 412–429 (KGCW…ECTE). Residues 444–478 (GEARKLSPEQDRANSPTSRELRIRRGDSPLPEAGA) are disordered. Residues 445–455 (EARKLSPEQDR) show a composition bias toward basic and acidic residues. Residues 489–493 (PQITL) form a dimerization of protease region. Residues 508 to 577 (IEALLDTGAD…TPINIIGRNM (70 aa)) enclose the Peptidase A2 domain. The active-site For protease activity; shared with dimeric partner is Asp-513. Dimerization of protease regions lie at residues 537-543 (GIGGFIK) and 576-588 (NMLT…LNFP). The Reverse transcriptase domain maps to 631 to 821 (EGKISKIGPE…PPFLWMGYEL (191 aa)). Asp-697, Asp-772, and Asp-773 together coordinate Mg(2+). Positions 814-822 (FLWMGYELH) are RT 'primer grip'. A Tryptophan repeat motif motif is present at residues 985–1001 (WEVWWTEYWQAAWIPEW). An RNase H type-1 domain is found at 1021-1144 (IPGAETYYVD…VDKLVSSGIR (124 aa)). Asp-1030, Glu-1065, Asp-1085, and Asp-1136 together coordinate Mg(2+). Residues 1150 to 1191 (DGIDKAQEEHERYHSNWRAMASDFNLPPVVAKEIVASCDKCQ) form an Integrase-type zinc finger. Zn(2+) is bound by residues His-1159, His-1163, Cys-1187, and Cys-1190. Residues 1201 to 1351 (VDCSPGIWQL…SAGERIIDII (151 aa)) enclose the Integrase catalytic domain. Mg(2+) contacts are provided by Asp-1211, Asp-1263, and Glu-1299. Positions 1370–1417 (FRVYYRDSRDPIWKGPAKLLWKGEGAVVIQDNNEIKVVPRRKAKILKD) form a DNA-binding region, integrase-type.

In terms of assembly, homotrimer; further assembles as hexamers of trimers. Interacts with gp41 (via C-terminus). Interacts with host CALM1; this interaction induces a conformational change in the Matrix protein, triggering exposure of the myristate group. Interacts with host AP3D1; this interaction allows the polyprotein trafficking to multivesicular bodies during virus assembly. Part of the pre-integration complex (PIC) which is composed of viral genome, matrix protein, Vpr and integrase. Homodimer; the homodimer further multimerizes as homohexamers or homopentamers. Interacts with human PPIA/CYPA; This interaction stabilizes the capsid. Interacts with human NUP153. Interacts with host PDZD8; this interaction stabilizes the capsid. Interacts with monkey TRIM5; this interaction destabilizes the capsid. As to quaternary structure, homodimer, whose active site consists of two apposed aspartic acid residues. In terms of assembly, heterodimer of p66 RT and p51 RT (RT p66/p51). Heterodimerization of RT is essential for DNA polymerase activity. The overall folding of the subdomains is similar in p66 RT and p51 RT but the spatial arrangements of the subdomains are dramatically different. Homotetramer; may further associate as a homohexadecamer. Part of the pre-integration complex (PIC) which is composed of viral genome, matrix protein, Vpr and integrase. Interacts with human SMARCB1/INI1 and human PSIP1/LEDGF isoform 1. Interacts with human KPNA3; this interaction might play a role in nuclear import of the pre-integration complex. Interacts with human NUP153; this interaction might play a role in nuclear import of the pre-integration complex. Mg(2+) is required as a cofactor. In terms of processing, specific enzymatic cleavages by the viral protease yield mature proteins. The protease is released by autocatalytic cleavage. The polyprotein is cleaved during and after budding, this process is termed maturation. Proteolytic cleavage of p66 RT removes the RNase H domain to yield the p51 RT subunit. Nucleocapsid protein p7 might be further cleaved after virus entry. Tyrosine phosphorylated presumably in the virion by a host kinase. Phosphorylation is apparently not a major regulator of membrane association. Post-translationally, phosphorylated possibly by host MAPK1; this phosphorylation is necessary for Pin1-mediated virion uncoating. In terms of processing, methylated by host PRMT6, impairing its function by reducing RNA annealing and the initiation of reverse transcription.

The protein resides in the host cell membrane. It localises to the host endosome. Its subcellular location is the host multivesicular body. The protein localises to the virion membrane. It is found in the host nucleus. The protein resides in the host cytoplasm. It localises to the virion. The enzyme catalyses Specific for a P1 residue that is hydrophobic, and P1' variable, but often Pro.. It catalyses the reaction Endohydrolysis of RNA in RNA/DNA hybrids. Three different cleavage modes: 1. sequence-specific internal cleavage of RNA. Human immunodeficiency virus type 1 and Moloney murine leukemia virus enzymes prefer to cleave the RNA strand one nucleotide away from the RNA-DNA junction. 2. RNA 5'-end directed cleavage 13-19 nucleotides from the RNA end. 3. DNA 3'-end directed cleavage 15-20 nucleotides away from the primer terminus.. It carries out the reaction 3'-end directed exonucleolytic cleavage of viral RNA-DNA hybrid.. The catalysed reaction is DNA(n) + a 2'-deoxyribonucleoside 5'-triphosphate = DNA(n+1) + diphosphate. With respect to regulation, protease: The viral protease is inhibited by many synthetic protease inhibitors (PIs), such as amprenavir, atazanavir, indinavir, loprinavir, nelfinavir, ritonavir and saquinavir. Use of protease inhibitors in tritherapy regimens permit more ambitious therapeutic strategies. Reverse transcriptase/ribonuclease H: RT can be inhibited either by nucleoside RT inhibitors (NRTIs) or by non nucleoside RT inhibitors (NNRTIs). NRTIs act as chain terminators, whereas NNRTIs inhibit DNA polymerization by binding a small hydrophobic pocket near the RT active site and inducing an allosteric change in this region. Classical NRTIs are abacavir, adefovir (PMEA), didanosine (ddI), lamivudine (3TC), stavudine (d4T), tenofovir (PMPA), zalcitabine (ddC), and zidovudine (AZT). Classical NNRTIs are atevirdine (BHAP U-87201E), delavirdine, efavirenz (DMP-266), emivirine (I-EBU), and nevirapine (BI-RG-587). The tritherapies used as a basic effective treatment of AIDS associate two NRTIs and one NNRTI. Mediates, with Gag polyprotein, the essential events in virion assembly, including binding the plasma membrane, making the protein-protein interactions necessary to create spherical particles, recruiting the viral Env proteins, and packaging the genomic RNA via direct interactions with the RNA packaging sequence (Psi). Gag-Pol polyprotein may regulate its own translation, by the binding genomic RNA in the 5'-UTR. At low concentration, the polyprotein would promote translation, whereas at high concentration, the polyprotein would encapsidate genomic RNA and then shut off translation. Its function is as follows. Targets the polyprotein to the plasma membrane via a multipartite membrane-binding signal, that includes its myristoylated N-terminus. Matrix protein is part of the pre-integration complex. Implicated in the release from host cell mediated by Vpu. Binds to RNA. Functionally, forms the conical core that encapsulates the genomic RNA-nucleocapsid complex in the virion. Most core are conical, with only 7% tubular. The core is constituted by capsid protein hexamer subunits. The core is disassembled soon after virion entry. Host restriction factors such as TRIM5-alpha or TRIMCyp bind retroviral capsids and cause premature capsid disassembly, leading to blocks in reverse transcription. Capsid restriction by TRIM5 is one of the factors which restricts HIV-1 to the human species. Host PIN1 apparently facilitates the virion uncoating. On the other hand, interactions with PDZD8 or CYPA stabilize the capsid. In terms of biological role, encapsulates and protects viral dimeric unspliced genomic RNA (gRNA). Binds these RNAs through its zinc fingers. Acts as a nucleic acid chaperone which is involved in rearangement of nucleic acid secondary structure during gRNA retrotranscription. Also facilitates template switch leading to recombination. As part of the polyprotein, participates in gRNA dimerization, packaging, tRNA incorporation and virion assembly. Aspartyl protease that mediates proteolytic cleavages of Gag and Gag-Pol polyproteins during or shortly after the release of the virion from the plasma membrane. Cleavages take place as an ordered, step-wise cascade to yield mature proteins. This process is called maturation. Displays maximal activity during the budding process just prior to particle release from the cell. Also cleaves Nef and Vif, probably concomitantly with viral structural proteins on maturation of virus particles. Hydrolyzes host EIF4GI and PABP1 in order to shut off the capped cellular mRNA translation. The resulting inhibition of cellular protein synthesis serves to ensure maximal viral gene expression and to evade host immune response. Also mediates cleavage of host YTHDF3. Mediates cleavage of host CARD8, thereby activating the CARD8 inflammasome, leading to the clearance of latent HIV-1 in patient CD4(+) T-cells after viral reactivation; in contrast, HIV-1 can evade CARD8-sensing when its protease remains inactive in infected cells prior to viral budding. Its function is as follows. Multifunctional enzyme that converts the viral RNA genome into dsDNA in the cytoplasm, shortly after virus entry into the cell. This enzyme displays a DNA polymerase activity that can copy either DNA or RNA templates, and a ribonuclease H (RNase H) activity that cleaves the RNA strand of RNA-DNA heteroduplexes in a partially processive 3' to 5' endonucleasic mode. Conversion of viral genomic RNA into dsDNA requires many steps. A tRNA(3)-Lys binds to the primer-binding site (PBS) situated at the 5'-end of the viral RNA. RT uses the 3' end of the tRNA primer to perform a short round of RNA-dependent minus-strand DNA synthesis. The reading proceeds through the U5 region and ends after the repeated (R) region which is present at both ends of viral RNA. The portion of the RNA-DNA heteroduplex is digested by the RNase H, resulting in a ssDNA product attached to the tRNA primer. This ssDNA/tRNA hybridizes with the identical R region situated at the 3' end of viral RNA. This template exchange, known as minus-strand DNA strong stop transfer, can be either intra- or intermolecular. RT uses the 3' end of this newly synthesized short ssDNA to perform the RNA-dependent minus-strand DNA synthesis of the whole template. RNase H digests the RNA template except for two polypurine tracts (PPTs) situated at the 5'-end and near the center of the genome. It is not clear if both polymerase and RNase H activities are simultaneous. RNase H probably can proceed both in a polymerase-dependent (RNA cut into small fragments by the same RT performing DNA synthesis) and a polymerase-independent mode (cleavage of remaining RNA fragments by free RTs). Secondly, RT performs DNA-directed plus-strand DNA synthesis using the PPTs that have not been removed by RNase H as primers. PPTs and tRNA primers are then removed by RNase H. The 3' and 5' ssDNA PBS regions hybridize to form a circular dsDNA intermediate. Strand displacement synthesis by RT to the PBS and PPT ends produces a blunt ended, linear dsDNA copy of the viral genome that includes long terminal repeats (LTRs) at both ends. Functionally, catalyzes viral DNA integration into the host chromosome, by performing a series of DNA cutting and joining reactions. This enzyme activity takes place after virion entry into a cell and reverse transcription of the RNA genome in dsDNA. The first step in the integration process is 3' processing. This step requires a complex comprising the viral genome, matrix protein, Vpr and integrase. This complex is called the pre-integration complex (PIC). The integrase protein removes 2 nucleotides from each 3' end of the viral DNA, leaving recessed CA OH's at the 3' ends. In the second step, the PIC enters cell nucleus. This process is mediated through integrase and Vpr proteins, and allows the virus to infect a non dividing cell. This ability to enter the nucleus is specific of lentiviruses, other retroviruses cannot and rely on cell division to access cell chromosomes. In the third step, termed strand transfer, the integrase protein joins the previously processed 3' ends to the 5' ends of strands of target cellular DNA at the site of integration. The 5'-ends are produced by integrase-catalyzed staggered cuts, 5 bp apart. A Y-shaped, gapped, recombination intermediate results, with the 5'-ends of the viral DNA strands and the 3' ends of target DNA strands remaining unjoined, flanking a gap of 5 bp. The last step is viral DNA integration into host chromosome. This involves host DNA repair synthesis in which the 5 bp gaps between the unjoined strands are filled in and then ligated. Since this process occurs at both cuts flanking the HIV genome, a 5 bp duplication of host DNA is produced at the ends of HIV-1 integration. Alternatively, Integrase may catalyze the excision of viral DNA just after strand transfer, this is termed disintegration. This is Gag-Pol polyprotein (gag-pol) from Human immunodeficiency virus type 1 group M subtype G (isolate 92NG083) (HIV-1).